A 425-amino-acid chain; its full sequence is Glutamate-1-semialdehyde 2,1-aminomutase (425 aa).

At K265 the chain carries N6-(pyridoxal phosphate)lysine.

It belongs to the class-III pyridoxal-phosphate-dependent aminotransferase family. HemL subfamily. Homodimer. Pyridoxal 5'-phosphate serves as cofactor.

The protein localises to the cytoplasm. The catalysed reaction is (S)-4-amino-5-oxopentanoate = 5-aminolevulinate. It functions in the pathway porphyrin-containing compound metabolism; protoporphyrin-IX biosynthesis; 5-aminolevulinate from L-glutamyl-tRNA(Glu): step 2/2. In Clostridium perfringens (strain 13 / Type A), this protein is Glutamate-1-semialdehyde 2,1-aminomutase.